Here is a 254-residue protein sequence, read N- to C-terminus: Hydroxyacylglutathione hydrolase (254 aa).

His-53, His-55, Asp-57, His-58, His-111, Asp-128, and His-166 together coordinate Zn(2+).

The protein belongs to the metallo-beta-lactamase superfamily. Glyoxalase II family. As to quaternary structure, monomer. The cofactor is Zn(2+).

It carries out the reaction an S-(2-hydroxyacyl)glutathione + H2O = a 2-hydroxy carboxylate + glutathione + H(+). The protein operates within secondary metabolite metabolism; methylglyoxal degradation; (R)-lactate from methylglyoxal: step 2/2. Its function is as follows. Thiolesterase that catalyzes the hydrolysis of S-D-lactoyl-glutathione to form glutathione and D-lactic acid. The polypeptide is Hydroxyacylglutathione hydrolase (Aeromonas hydrophila subsp. hydrophila (strain ATCC 7966 / DSM 30187 / BCRC 13018 / CCUG 14551 / JCM 1027 / KCTC 2358 / NCIMB 9240 / NCTC 8049)).